Here is a 329-residue protein sequence, read N- to C-terminus: Very long chain fatty acid elongase 7 (329 aa).

7 helical membrane passes run 26-46 (YPLM…AYIV), 66-86 (LIVY…ESCI), 114-134 (GCWW…FFVM), 146-166 (VIHH…TPGG), 170-190 (FFGF…MLAA), 205-225 (LTVM…QLFF), and 233-253 (IGFA…FSNF).

The protein belongs to the ELO family.

It is found in the membrane. The enzyme catalyses a very-long-chain acyl-CoA + malonyl-CoA + H(+) = a very-long-chain 3-oxoacyl-CoA + CO2 + CoA. In terms of biological role, catalyzes the first and rate-limiting reaction of the four reactions that constitute the long-chain fatty acids elongation cycle. This endoplasmic reticulum-bound enzymatic process allows the addition of 2 carbons to the chain of long- and very long-chain fatty acids (VLCFAs) per cycle. This Drosophila melanogaster (Fruit fly) protein is Very long chain fatty acid elongase 7.